A 392-amino-acid polypeptide reads, in one-letter code: Stilbene synthase 1 (392 aa).

55 to 58 (KFNR) lines the substrate pocket. The active site involves Cys164. Substrate is bound by residues Leu267 and 305–307 (GGP).

It belongs to the thiolase-like superfamily. Chalcone/stilbene synthases family. In terms of assembly, homodimer. As to expression, in leaves, expressed in palisade and spongy parenchyma cells and, to a lesser extent, in epidermal cells after induction.

The protein localises to the cytoplasm. The enzyme catalyses 4-coumaroyl-CoA + 3 malonyl-CoA + 3 H(+) = trans-resveratrol + 4 CO2 + 4 CoA. It functions in the pathway phytoalexin biosynthesis; 3,4',5-trihydroxystilbene biosynthesis; 3,4',5-trihydroxystilbene from trans-4-coumarate: step 2/2. Functionally, mediates resistance to pathogens which are sensitive to stilbenes such as Botrytis cinerea, Eutypa lata and Plasmopora viticola by enhancing the production of phytoalexins. Confers resistance to Phytophthora palmivora when expressed in papaya. The sequence is that of Stilbene synthase 1 (VINST1) from Vitis vinifera (Grape).